The primary structure comprises 306 residues: Pantothenate kinase (306 aa).

ATP is bound at residue 91–98 (GSVAVGKS).

It belongs to the prokaryotic pantothenate kinase family.

It is found in the cytoplasm. The enzyme catalyses (R)-pantothenate + ATP = (R)-4'-phosphopantothenate + ADP + H(+). It functions in the pathway cofactor biosynthesis; coenzyme A biosynthesis; CoA from (R)-pantothenate: step 1/5. This Streptococcus equi subsp. equi (strain 4047) protein is Pantothenate kinase.